The following is a 1249-amino-acid chain: Cilia- and flagella-associated protein 57 (1249 aa).

WD repeat units follow at residues 105 to 148, 195 to 233, 335 to 374, 386 to 425, 427 to 469, 471 to 506, 509 to 548, and 635 to 674; these read FQVQ…AIIK, GESS…WETS, SDKQ…ISKG, LHSA…LELY, EYQE…KEYS, RGCK…NINI, GHTG…RETE, and AHAG…GRGI. Coiled coils occupy residues 690 to 1056 and 1094 to 1165; these read KTDM…KTDL and SDLQ…SALK.

The protein belongs to the CFAP57 family. May form homodimers. Associates with components of the nexin-dynein regulatory complex (N-DRC) and the CFAP184:CFAP263 complex. As to expression, predominanly expressed in testis, lung and skin. Weak expression in brain and kidney.

The protein localises to the cytoplasm. Its subcellular location is the cytoskeleton. The protein resides in the cilium axoneme. Its function is as follows. Associates with components of the nexin-dynein regulatory complex (N-DRC), a key regulator of ciliary/flagellar motility, and might act as an inner dynein arm (IDA) hub or linkage. The polypeptide is Cilia- and flagella-associated protein 57 (Mus musculus (Mouse)).